We begin with the raw amino-acid sequence, 302 residues long: Porphobilinogen deaminase (302 aa).

S-(dipyrrolylmethanemethyl)cysteine is present on Cys234.

Belongs to the HMBS family. As to quaternary structure, monomer. Dipyrromethane serves as cofactor.

The enzyme catalyses 4 porphobilinogen + H2O = hydroxymethylbilane + 4 NH4(+). It participates in porphyrin-containing compound metabolism; protoporphyrin-IX biosynthesis; coproporphyrinogen-III from 5-aminolevulinate: step 2/4. In terms of biological role, tetrapolymerization of the monopyrrole PBG into the hydroxymethylbilane pre-uroporphyrinogen in several discrete steps. The sequence is that of Porphobilinogen deaminase from Corynebacterium glutamicum (strain R).